A 1150-amino-acid polypeptide reads, in one-letter code: RNA polymerase-associated protein CTR9 (1150 aa).

13 TPR repeats span residues 143-176 (VRAWFYLFERDKSTNKYELADQQFNYVVKTNPKN), 177-210 (VLPLIGKAVIAFNKKDYKTAIYYFRKAIRQCRHT), 212-245 (ADLRVGIGHCFAKMGMMDKAKTAFERAMEIEPYN), 247-282 (SAMCGLGIILLNTYDHDSLKHAVSLFGRSYNLQTDH), 320-353 (AEAFYQMGRCRHAQGQFDGAYKYYYQARQANNGE), 355-388 (TLAHYGLGQMYIHRNEIEEAIKCFDTVHKRLPNN), 432-464 (YEACIDLAQLLEATDPKRSLELYENAIDLLVTN), 471-504 (PEMLNNVGALYMSMKQYEKAEHHFKRAKERLEEQ), 594-627 (PIVWTLIGNLHFAKNEWMPAQKKFEFILSKIFNN), 643-677 (FEQLLNPSRKKEDEKKYIDRALQMYQKALKLQPKN), 679-711 (YAANGIGCVLAYKRNWNDARDVFSQVRESTSEF), 712-745 (YDVWLNIAHVCMEREQWMAAVQMYSSAMKKFRKE), and 748-781 (STLQHYLAKAYYRANMLNEAKEALECAMLDQLDN). Coiled-coil stretches lie at residues 848–916 (AEEA…NLRL) and 972–1028 (ERRE…AKQS). A disordered region spans residues 935–1150 (KRRGGGGRKR…KKKVIESDSD (216 aa)). The span at 975-992 (ERRKKDKAAKKASRKKRE) shows a compositional bias: basic residues. Composition is skewed to basic and acidic residues over residues 993–1005 (RRDSGGPDSNRRD), 1013–1024 (EERDRKLQEKLS), 1060–1084 (DPRPPVDEFDSPTRTDSDSDRETTT), and 1132–1150 (RDSDGSDAPKKKVIESDSD).

As to quaternary structure, component of the PAF1 complex which consists of at least cdc-73, ctr-9, leo-1, pafo-1 and rtfo-1.

The protein localises to the nucleus. In terms of biological role, component of the PAF1 complex which is a multifunctional complex involved in transcription initiation via genetic interactions with TATA-binding proteins, elongation and transcription-coupled histone modification. Ctr-9 is required for epidermal microtubule organization during morphogenesis. The protein is RNA polymerase-associated protein CTR9 of Caenorhabditis elegans.